The primary structure comprises 225 residues: N-(5'-phosphoribosyl)anthranilate isomerase (225 aa).

Belongs to the TrpF family.

It catalyses the reaction N-(5-phospho-beta-D-ribosyl)anthranilate = 1-(2-carboxyphenylamino)-1-deoxy-D-ribulose 5-phosphate. Its pathway is amino-acid biosynthesis; L-tryptophan biosynthesis; L-tryptophan from chorismate: step 3/5. This is N-(5'-phosphoribosyl)anthranilate isomerase from Nitrobacter winogradskyi (strain ATCC 25391 / DSM 10237 / CIP 104748 / NCIMB 11846 / Nb-255).